The following is a 252-amino-acid chain: Protein BTG3 (252 aa).

Residues 138 to 162 (VTSDYHSGSSSSDEDTSKEVEVKPS) are disordered.

This sequence belongs to the BTG family. In terms of tissue distribution, highly expressed in the brain.

Its function is as follows. Overexpression impairs serum-induced cell cycle progression from the G0/G1 to S phase. This chain is Protein BTG3, found in Rattus norvegicus (Rat).